We begin with the raw amino-acid sequence, 376 residues long: Putative 12-oxophytodienoate reductase 13 (376 aa).

Residues 25–27 (PLT), alanine 58, and glutamine 99 each bind FMN. 165–168 (HGAH) contributes to the substrate binding site. FMN contacts are provided by residues arginine 217, glycine 301, and 322–323 (GR).

Belongs to the NADH:flavin oxidoreductase/NADH oxidase family. The cofactor is FMN.

Functionally, putative oxophytodienoate reductase that may be involved in the biosynthesis or metabolism of oxylipin signaling molecules. The chain is Putative 12-oxophytodienoate reductase 13 (OPR13) from Oryza sativa subsp. japonica (Rice).